A 33-amino-acid polypeptide reads, in one-letter code: Protamine (33 aa).

Positions methionine 1–arginine 33 are disordered.

As to expression, testis.

The protein localises to the nucleus. It localises to the chromosome. Its function is as follows. Protamines substitute for histones in the chromatin of sperm during the haploid phase of spermatogenesis. They compact sperm DNA into a highly condensed, stable and inactive complex. The chain is Protamine from Oncorhynchus keta (Chum salmon).